We begin with the raw amino-acid sequence, 186 residues long: EF-hand protein 5 (186 aa).

Positions 1 to 23 (MSRSKEVSPNLSQQKRGDVRSAG) are disordered. 4 EF-hand domains span residues 41 to 76 (SAEL…GLHT), 77 to 112 (SEEE…GIDE), 113 to 148 (ASIA…SGEH), and 149 to 186 (SSAE…LNKM). 3 residues coordinate Ca(2+): Glu98, Asp126, and Thr130.

The sequence is that of EF-hand protein 5 from Leishmania tarentolae (Sauroleishmania tarentolae).